The chain runs to 642 residues: Chaperone protein DnaK (642 aa).

Phosphothreonine; by autocatalysis is present on threonine 198. The span at 578 to 589 (DDKEAIESRMQK) shows a compositional bias: basic and acidic residues. Residues 578–642 (DDKEAIESRM…FEEVKDGDKK (65 aa)) are disordered. Residues 603–619 (AEQAAQQGGDAGAQAED) show a composition bias toward low complexity.

The protein belongs to the heat shock protein 70 family.

In terms of biological role, acts as a chaperone. In Hahella chejuensis (strain KCTC 2396), this protein is Chaperone protein DnaK.